The sequence spans 83 residues: NADH dehydrogenase [ubiquinone] iron-sulfur protein 5-B (83 aa).

The CHCH domain occupies 11 to 52 (KGRCYDFWMDFSECMSHCREPKDCTLLREDYLECLHHSKEFQ). 2 short sequence motifs (cx9C motif) span residues 14–24 (CYDFWMDFSEC) and 34–44 (CTLLREDYLEC). 2 disulfide bridges follow: Cys-14–Cys-44 and Cys-24–Cys-34. Positions 62-83 (QRKLRAASRKGEETGDGTHTHH) are disordered.

This sequence belongs to the complex I NDUFS5 subunit family. In terms of assembly, complex I is composed of at least 49 different subunits. This is a component of the iron-sulfur (IP) fragment of the enzyme.

Its subcellular location is the mitochondrion. It is found in the mitochondrion inner membrane. It localises to the mitochondrion intermembrane space. Accessory subunit of the mitochondrial membrane respiratory chain NADH dehydrogenase (Complex I), that is believed not to be involved in catalysis. Complex I functions in the transfer of electrons from NADH to the respiratory chain. The immediate electron acceptor for the enzyme is believed to be ubiquinone. This is NADH dehydrogenase [ubiquinone] iron-sulfur protein 5-B from Arabidopsis thaliana (Mouse-ear cress).